We begin with the raw amino-acid sequence, 177 residues long: Large ribosomal subunit protein uL6 (177 aa).

The protein belongs to the universal ribosomal protein uL6 family. In terms of assembly, part of the 50S ribosomal subunit.

Functionally, this protein binds to the 23S rRNA, and is important in its secondary structure. It is located near the subunit interface in the base of the L7/L12 stalk, and near the tRNA binding site of the peptidyltransferase center. The chain is Large ribosomal subunit protein uL6 from Paramagnetospirillum magneticum (strain ATCC 700264 / AMB-1) (Magnetospirillum magneticum).